The primary structure comprises 121 residues: Small ribosomal subunit protein bS6 (121 aa).

The interval proline 99–alanine 121 is disordered. A compositionally biased stretch (basic and acidic residues) spans asparagine 105–glutamine 115.

It belongs to the bacterial ribosomal protein bS6 family.

Functionally, binds together with bS18 to 16S ribosomal RNA. The protein is Small ribosomal subunit protein bS6 of Polaromonas naphthalenivorans (strain CJ2).